Here is a 100-residue protein sequence, read N- to C-terminus: Putative sodium channel toxin Ts26 (100 aa).

The first 22 residues, 1–22, serve as a signal peptide directing secretion; it reads MVKSAMKIVILILFVLLIRVES. The region spanning 24–92 is the LCN-type CS-alpha/beta domain; it reads RNGYPDISDG…VMDTTIEYCE (69 aa). 4 cysteine pairs are disulfide-bonded: Cys-38-Cys-64, Cys-50-Cys-69, Cys-54-Cys-71, and Cys-65-Cys-91.

This sequence belongs to the long (4 C-C) scorpion toxin superfamily. Sodium channel inhibitor family. As to expression, expressed by the venom gland.

It is found in the secreted. Functionally, putative sodium channel toxin. In Tityus serrulatus (Brazilian scorpion), this protein is Putative sodium channel toxin Ts26.